A 365-amino-acid polypeptide reads, in one-letter code: 3-dehydroquinate synthase (365 aa).

NAD(+) is bound by residues D75–K80, G109–D113, T133–T134, K146, and K155. Zn(2+) is bound by residues E188, H253, and H269.

It belongs to the sugar phosphate cyclases superfamily. Dehydroquinate synthase family. The cofactor is NAD(+). Requires Co(2+) as cofactor. Zn(2+) is required as a cofactor.

The protein localises to the cytoplasm. The catalysed reaction is 7-phospho-2-dehydro-3-deoxy-D-arabino-heptonate = 3-dehydroquinate + phosphate. It participates in metabolic intermediate biosynthesis; chorismate biosynthesis; chorismate from D-erythrose 4-phosphate and phosphoenolpyruvate: step 2/7. Functionally, catalyzes the conversion of 3-deoxy-D-arabino-heptulosonate 7-phosphate (DAHP) to dehydroquinate (DHQ). In Corynebacterium efficiens (strain DSM 44549 / YS-314 / AJ 12310 / JCM 11189 / NBRC 100395), this protein is 3-dehydroquinate synthase.